We begin with the raw amino-acid sequence, 388 residues long: UPF0229 protein BH1031 (388 aa).

Positions 80 to 117 are disordered; sequence HVGQGDGDSQVGDVIARDPSAGQQGPGKGQGAGDQPGE. Residues 103 to 113 show a composition bias toward gly residues; that stretch reads QGPGKGQGAGD.

This sequence belongs to the UPF0229 family.

This Halalkalibacterium halodurans (strain ATCC BAA-125 / DSM 18197 / FERM 7344 / JCM 9153 / C-125) (Bacillus halodurans) protein is UPF0229 protein BH1031.